A 208-amino-acid polypeptide reads, in one-letter code: Small ribosomal subunit protein uS4 (208 aa).

Positions 98 to 159 (RRLDNVVYRL…KSRKIVSIND (62 aa)) constitute an S4 RNA-binding domain.

It belongs to the universal ribosomal protein uS4 family. As to quaternary structure, part of the 30S ribosomal subunit. Contacts protein S5. The interaction surface between S4 and S5 is involved in control of translational fidelity.

In terms of biological role, one of the primary rRNA binding proteins, it binds directly to 16S rRNA where it nucleates assembly of the body of the 30S subunit. With S5 and S12 plays an important role in translational accuracy. The protein is Small ribosomal subunit protein uS4 of Pelobacter propionicus (strain DSM 2379 / NBRC 103807 / OttBd1).